Consider the following 152-residue polypeptide: Stigma-specific STIG1-like protein 1 (152 aa).

An N-terminal signal peptide occupies residues 1–19 (MAFVKLLVSIAITTAITIA).

The protein belongs to the STIG1 family.

This chain is Stigma-specific STIG1-like protein 1, found in Arabidopsis thaliana (Mouse-ear cress).